The sequence spans 493 residues: L-arabinose isomerase 1 (493 aa).

Residues Glu301, Glu326, His343, and His442 each contribute to the Mn(2+) site.

This sequence belongs to the arabinose isomerase family. Mn(2+) serves as cofactor.

The catalysed reaction is beta-L-arabinopyranose = L-ribulose. It functions in the pathway carbohydrate degradation; L-arabinose degradation via L-ribulose; D-xylulose 5-phosphate from L-arabinose (bacterial route): step 1/3. Its function is as follows. Catalyzes the conversion of L-arabinose to L-ribulose. The protein is L-arabinose isomerase 1 of Bacillus licheniformis (strain ATCC 14580 / DSM 13 / JCM 2505 / CCUG 7422 / NBRC 12200 / NCIMB 9375 / NCTC 10341 / NRRL NRS-1264 / Gibson 46).